We begin with the raw amino-acid sequence, 460 residues long: Anthocyanidin 3-O-glucoside 5-O-glucosyltransferase 1 (460 aa).

An N-terminal signal peptide occupies residues 1-22 (MVRRRVLLATFPAQGHINPALQ). The Proton acceptor role is filled by H16. Residue H16 coordinates an anthocyanidin. UDP-alpha-D-glucose contacts are provided by Q338, H353, W356, N357, S358, E361, D377, and Q378.

Belongs to the UDP-glycosyltransferase family.

The catalysed reaction is an anthocyanidin 3-O-beta-D-glucoside + UDP-alpha-D-glucose = an anthocyanidin 3,5-di-O-beta-D-glucoside + UDP + 2 H(+). It functions in the pathway pigment biosynthesis; anthocyanin biosynthesis. Catalyzes the glucosylation at the O-5 position of anthocyanidin 3-glucosides to form anthocyanidin 3,5-di-O-glucosides using UDP-glucose as sugar donor. Anthocyanidin 3,5-di-O-glucosides are molecules that are responsible for pigmentation. Also acts on anthocyanidin 3-O-(6-O-malonylglucoside). Much less active with hydroxycinnamoylglucose derivatives. No activity in the absence of the 3-O-glucoside group. The sequence is that of Anthocyanidin 3-O-glucoside 5-O-glucosyltransferase 1 (PF3R4) from Perilla frutescens (Beefsteak mint).